A 54-amino-acid polypeptide reads, in one-letter code: Anti-adapter protein SpxO (54 aa).

Interacts with SpxH.

Functionally, inhibitor of Spx proteolytic control. Acts by interacting with SpxH/YjbH, which disrupts interaction between SpxH and Spx, and inhibits SpxH-enhanced proteolysis of Spx by ClpXP. Required for the stabilization of Spx and activation of Spx-regulated genes in response to cell wall stress. The polypeptide is Anti-adapter protein SpxO (Bacillus subtilis (strain 168)).